We begin with the raw amino-acid sequence, 186 residues long: MADEQQTLDQQTPEQPTGAAEDLTARVQELEEQLAAAQDQALRMVADLQNVRRRAEQDVEKAHKFALEKFAGDLLAVVDTLERGLEMSDPNDEAIKPMREGMELTLKMFDDTLRRYQVEALNPEGEPFNPEQHQAMAMQESASAEPGSVLKVFQKGYLLNGRLLRPAMVVVSKAPAETPPSIDEQA.

Residues 1–15 (MADEQQTLDQQTPEQ) show a composition bias toward polar residues. The tract at residues 1-20 (MADEQQTLDQQTPEQPTGAA) is disordered.

This sequence belongs to the GrpE family. As to quaternary structure, homodimer.

It localises to the cytoplasm. Functionally, participates actively in the response to hyperosmotic and heat shock by preventing the aggregation of stress-denatured proteins, in association with DnaK and GrpE. It is the nucleotide exchange factor for DnaK and may function as a thermosensor. Unfolded proteins bind initially to DnaJ; upon interaction with the DnaJ-bound protein, DnaK hydrolyzes its bound ATP, resulting in the formation of a stable complex. GrpE releases ADP from DnaK; ATP binding to DnaK triggers the release of the substrate protein, thus completing the reaction cycle. Several rounds of ATP-dependent interactions between DnaJ, DnaK and GrpE are required for fully efficient folding. This Pseudomonas aeruginosa (strain UCBPP-PA14) protein is Protein GrpE.